The following is a 288-amino-acid chain: Shikimate dehydrogenase (NADP(+)) (288 aa).

Residues 21–23 and Thr68 each bind shikimate; that span reads SLS. Lys72 serves as the catalytic Proton acceptor. NADP(+) is bound at residue Glu84. Shikimate is bound by residues Asn93 and Asp108. NADP(+) contacts are provided by residues 132–136 and Leu230; that span reads GNGGA. A shikimate-binding site is contributed by Tyr232. Residue Gly253 coordinates NADP(+).

Belongs to the shikimate dehydrogenase family. In terms of assembly, homodimer.

It carries out the reaction shikimate + NADP(+) = 3-dehydroshikimate + NADPH + H(+). It participates in metabolic intermediate biosynthesis; chorismate biosynthesis; chorismate from D-erythrose 4-phosphate and phosphoenolpyruvate: step 4/7. Functionally, involved in the biosynthesis of the chorismate, which leads to the biosynthesis of aromatic amino acids. Catalyzes the reversible NADPH linked reduction of 3-dehydroshikimate (DHSA) to yield shikimate (SA). The protein is Shikimate dehydrogenase (NADP(+)) of Gloeothece citriformis (strain PCC 7424) (Cyanothece sp. (strain PCC 7424)).